Consider the following 35-residue polypeptide: Neurotoxin (35 aa).

3 disulfide bridges follow: C7–C27, C14–C32, and C18–C34.

As to expression, expressed by the venom gland.

It localises to the secreted. Neurotoxin. Decreases the action potential of myelinated nerves in mice and frogs. This chain is Neurotoxin, found in Buthus sp. (strain IY-2001) (Scorpion).